Here is a 200-residue protein sequence, read N- to C-terminus: Somatotropin (200 aa).

An N-terminal signal peptide occupies residues 1 to 22; the sequence is MARVLVVLSVVVASLFFSQGAT. H38 lines the Zn(2+) pocket. C71 and C173 are disulfide-bonded. E182 contacts Zn(2+). C190 and C198 are oxidised to a cystine.

Belongs to the somatotropin/prolactin family.

It localises to the secreted. Functionally, growth hormone plays an important role in growth control and is involved in the regulation of several anabolic processes. Implicated as an osmoregulatory substance important for seawater adaptation. In Heteropneustes fossilis (Stinging catfish), this protein is Somatotropin (gh).